A 430-amino-acid polypeptide reads, in one-letter code: MSISVVILAAGQGTRMKSSTPKVLHTISGKPMLFHAIDAAKEISDDITVILHHQEERIQKEVEAEYENIIFHRQDAKNFPGTGGAMKGVYTRHERTLILNGDMPLIKKSSLEALTSGDADINMSIIRLEDPSGYGRVIIEDDKVVEIVEQKDCNEAQLCTQTVNAGIYAVDTALLERYIPLLRNDNAQKEYYLTDIVKMAVDEGRTVHPVYVEEEEFKGVNSKLDLARAEEIMQRRIKEALMMAGVTMCLPETIYIDCRATFEGECELENGVRIQGAAQLVNTHIKAHSVIEDSYLKNSDVGPMGRVRPGSKLVDTHIGNFVEVKKSDLNGVKAGHLSYIGDAQIGEGSNIGAGVITCNYDGKNKFRTIIGKNVFVGSDTQLVAPVCIEDDVIIAAGTTVNKDVEKGVLAISRTPMRTVKNFFYKFFGDK.

The pyrophosphorylase stretch occupies residues 1–223 (MSISVVILAA…EEEFKGVNSK (223 aa)). Residues 8–11 (LAAG), Lys22, and 81–82 (GT) each bind UDP-N-acetyl-alpha-D-glucosamine. Position 102 (Asp102) interacts with Mg(2+). Positions 135, 149, 164, and 221 each coordinate UDP-N-acetyl-alpha-D-glucosamine. Asn221 provides a ligand contact to Mg(2+). The tract at residues 224 to 244 (LDLARAEEIMQRRIKEALMMA) is linker. Residues 245-430 (GVTMCLPETI…NFFYKFFGDK (186 aa)) are N-acetyltransferase. Residues Arg308 and Lys325 each contribute to the UDP-N-acetyl-alpha-D-glucosamine site. His336 serves as the catalytic Proton acceptor. UDP-N-acetyl-alpha-D-glucosamine contacts are provided by Tyr339 and Asn350. Residues Ala353, 359 to 360 (NY), Ser378, Ala396, and Arg413 each bind acetyl-CoA.

It in the N-terminal section; belongs to the N-acetylglucosamine-1-phosphate uridyltransferase family. In the C-terminal section; belongs to the transferase hexapeptide repeat family. As to quaternary structure, homotrimer. Mg(2+) is required as a cofactor.

It localises to the cytoplasm. It catalyses the reaction alpha-D-glucosamine 1-phosphate + acetyl-CoA = N-acetyl-alpha-D-glucosamine 1-phosphate + CoA + H(+). It carries out the reaction N-acetyl-alpha-D-glucosamine 1-phosphate + UTP + H(+) = UDP-N-acetyl-alpha-D-glucosamine + diphosphate. It participates in nucleotide-sugar biosynthesis; UDP-N-acetyl-alpha-D-glucosamine biosynthesis; N-acetyl-alpha-D-glucosamine 1-phosphate from alpha-D-glucosamine 6-phosphate (route II): step 2/2. The protein operates within nucleotide-sugar biosynthesis; UDP-N-acetyl-alpha-D-glucosamine biosynthesis; UDP-N-acetyl-alpha-D-glucosamine from N-acetyl-alpha-D-glucosamine 1-phosphate: step 1/1. It functions in the pathway bacterial outer membrane biogenesis; LPS lipid A biosynthesis. Its function is as follows. Catalyzes the last two sequential reactions in the de novo biosynthetic pathway for UDP-N-acetylglucosamine (UDP-GlcNAc). The C-terminal domain catalyzes the transfer of acetyl group from acetyl coenzyme A to glucosamine-1-phosphate (GlcN-1-P) to produce N-acetylglucosamine-1-phosphate (GlcNAc-1-P), which is converted into UDP-GlcNAc by the transfer of uridine 5-monophosphate (from uridine 5-triphosphate), a reaction catalyzed by the N-terminal domain. This Sulfurovum sp. (strain NBC37-1) protein is Bifunctional protein GlmU.